The chain runs to 238 residues: Survival of motor neuron-related-splicing factor 30 (238 aa).

The region spanning 72–132 is the Tudor domain; sequence SWKVGDKCMA…KPVEEGRKAK (61 aa). The short motif at 142–160 is the Nuclear localization signal element; it reads KKEMIAQQREYKKKKALKK. Residue serine 201 is modified to Phosphoserine. Residue lysine 219 is modified to N6-acetyllysine.

This sequence belongs to the SMN family. In terms of assembly, associates with spliceosomes. Associates with U4/U5/U6 tri-snRNP and with U2 snRNP.

It is found in the nucleus speckle. Its subcellular location is the nucleus. The protein resides in the cajal body. Functionally, involved in spliceosome assembly. The polypeptide is Survival of motor neuron-related-splicing factor 30 (Smndc1) (Rattus norvegicus (Rat)).